The sequence spans 46 residues: GTP cyclohydrolase 1 (46 aa).

Cysteine 7 lines the Zn(2+) pocket.

This sequence belongs to the GTP cyclohydrolase I family. In terms of assembly, homomer.

The enzyme catalyses GTP + H2O = 7,8-dihydroneopterin 3'-triphosphate + formate + H(+). Its pathway is cofactor biosynthesis; 7,8-dihydroneopterin triphosphate biosynthesis; 7,8-dihydroneopterin triphosphate from GTP: step 1/1. The sequence is that of GTP cyclohydrolase 1 (folE) from Bacillus pumilus (Bacillus mesentericus).